A 147-amino-acid chain; its full sequence is Large ribosomal subunit protein uL13 (147 aa).

Residues 126-147 form a disordered region; that stretch reads GGPEHPHAAQNPQPYEITQIAQ.

It belongs to the universal ribosomal protein uL13 family. As to quaternary structure, part of the 50S ribosomal subunit.

Functionally, this protein is one of the early assembly proteins of the 50S ribosomal subunit, although it is not seen to bind rRNA by itself. It is important during the early stages of 50S assembly. The sequence is that of Large ribosomal subunit protein uL13 from Cutibacterium acnes (strain DSM 16379 / KPA171202) (Propionibacterium acnes).